The following is a 261-amino-acid chain: DNA repair protein RecO (261 aa).

It belongs to the RecO family.

Its function is as follows. Involved in DNA repair and RecF pathway recombination. The protein is DNA repair protein RecO of Gloeobacter violaceus (strain ATCC 29082 / PCC 7421).